A 118-amino-acid chain; its full sequence is MARIAGVNIPDHKHAVISLTYVYGIGRTKAKQICSAAGVAESTKIGDLSEEQVDTIRNEVAKFTVEGDLRREVSMNIKRLMDLGCYRGLRHRRNLPVRGQRSKTNARTRKGPRKPIKR.

Residues 93 to 118 (RNLPVRGQRSKTNARTRKGPRKPIKR) are disordered.

It belongs to the universal ribosomal protein uS13 family. Part of the 30S ribosomal subunit. Forms a loose heterodimer with protein S19. Forms two bridges to the 50S subunit in the 70S ribosome.

Functionally, located at the top of the head of the 30S subunit, it contacts several helices of the 16S rRNA. In the 70S ribosome it contacts the 23S rRNA (bridge B1a) and protein L5 of the 50S subunit (bridge B1b), connecting the 2 subunits; these bridges are implicated in subunit movement. Contacts the tRNAs in the A and P-sites. This Saccharophagus degradans (strain 2-40 / ATCC 43961 / DSM 17024) protein is Small ribosomal subunit protein uS13.